Consider the following 507-residue polypeptide: MGCWGRNRGRLLCMLLLTFMFMVLEVVVSRVTASLAMLSDSFHMLSDVLALVVALVAERFARRTHATQKNTFGWIRAEVMGALVNAIFLTGLCFAILLEAVERFIEPHEMQQPLVVLSVGVAGLLVNVLGLCLFHHHSGEGQGAGHGHSHGHGHGHLAKGARKAGRAGGEAGAPPGRAPDQEPDQEETNTLVANTSNSNGLKADQAEPEKLRSDDPVDVQVNGNLIQESDSLESEDNRAGQLNMRGVFLHVLGDALGSVIVVVNALVFYFSWKGCTEDDFCVNPCFPDPCKSSVELMNSTQAPMHEAGPCWVLYLDPTLCIIMVCILLYTTYPLLKESALILLQTVPKQIDIKHLVKELRDVEGVEEVHELHVWQLAGSRIIATAHIKCEDPASYMQVAKTIKDVFHNHGIHATTIQPEFASVGSKSSVVPCELACRTQCALKQCCGTRPQVHSGKEAEKAPTVSISCLELSENLEKKPRRTKAEGSVPAVVIEIKNVPNKQPESSL.

Topologically, residues 1–10 are cytoplasmic; sequence MGCWGRNRGR. The helical transmembrane segment at 11-31 threads the bilayer; that stretch reads LLCMLLLTFMFMVLEVVVSRV. Residues 32 to 35 lie on the Extracellular side of the membrane; that stretch reads TASL. Residues 36–56 form a helical membrane-spanning segment; it reads AMLSDSFHMLSDVLALVVALV. Zn(2+) is bound by residues H43 and D47. At 57-78 the chain is on the cytoplasmic side; it reads AERFARRTHATQKNTFGWIRAE. Residues 79 to 99 form a helical membrane-spanning segment; that stretch reads VMGALVNAIFLTGLCFAILLE. The Extracellular portion of the chain corresponds to 100-113; that stretch reads AVERFIEPHEMQQP. Residues 114-134 traverse the membrane as a helical segment; sequence LVVLSVGVAGLLVNVLGLCLF. The Cytoplasmic portion of the chain corresponds to 135-247; it reads HHHSGEGQGA…RAGQLNMRGV (113 aa). Positions 140–218 are disordered; that stretch reads EGQGAGHGHS…EKLRSDDPVD (79 aa). The segment at 145–156 is 6 X 2 AA approximate repeats of H-G; sequence GHGHSHGHGHGH. Residues 147–165 show a composition bias toward basic residues; it reads GHSHGHGHGHLAKGARKAG. The segment covering 188 to 200 has biased composition (polar residues); it reads TNTLVANTSNSNG. A compositionally biased stretch (basic and acidic residues) spans 204-215; that stretch reads DQAEPEKLRSDD. Residues 248 to 268 form a helical membrane-spanning segment; that stretch reads FLHVLGDALGSVIVVVNALVF. H250 and D254 together coordinate Zn(2+). Residues 269 to 307 are Extracellular-facing; sequence YFSWKGCTEDDFCVNPCFPDPCKSSVELMNSTQAPMHEA. Residue N298 is glycosylated (N-linked (GlcNAc...) asparagine). A helical membrane pass occupies residues 308-328; the sequence is GPCWVLYLDPTLCIIMVCILL. Residues 329 to 507 are Cytoplasmic-facing; sequence YTTYPLLKES…VPNKQPESSL (179 aa). Position 506 is a phosphoserine (S506).

This sequence belongs to the cation diffusion facilitator (CDF) transporter (TC 2.A.4) family. SLC30A subfamily. As to quaternary structure, homodimer. Interacts with TMEM163. Interacts and forms a complex with TMC6 and TMC8; the interaction regulates zinc transport into the ER. As to expression, widely expressed. Detected in duodenum and jejunum but not in ileum and colon (at protein level). Expressed by neuroglial cells (at protein level).

The protein localises to the cell membrane. It localises to the basolateral cell membrane. It is found in the cytoplasmic vesicle membrane. The protein resides in the cytoplasm. Its subcellular location is the endoplasmic reticulum membrane. The protein localises to the golgi apparatus membrane. It localises to the nucleus membrane. It carries out the reaction Zn(2+)(in) + 2 H(+)(out) = Zn(2+)(out) + 2 H(+)(in). With respect to regulation, calcium-dependent. Its function is as follows. Zinc ion:proton antiporter that could function at the plasma membrane mediating zinc efflux from cells against its electrochemical gradient protecting them from intracellular zinc accumulation and toxicity. Alternatively, could prevent the transport to the plasma membrane of CACNB2, the L-type calcium channels regulatory subunit, through a yet to be defined mechanism. By modulating the expression of these channels at the plasma membrane, could prevent calcium and zinc influx into cells. By the same mechanism, could also prevent L-type calcium channels-mediated heavy metal influx into cells. In some cells, could also function as a zinc ion:proton antiporter mediating zinc entry into the lumen of cytoplasmic vesicles. In macrophages, can increase zinc ions concentration into the lumen of cytoplasmic vesicles containing engulfed bacteria and could help inactivate them. Forms a complex with TMC6/EVER1 and TMC8/EVER2 at the ER membrane of keratynocytes which facilitates zinc uptake into the ER. Down-regulates the activity of transcription factors induced by zinc and cytokines. This Rattus norvegicus (Rat) protein is Proton-coupled zinc antiporter SLC30A1.